Here is a 425-residue protein sequence, read N- to C-terminus: Caveolae-associated protein 2 (425 aa).

The tract at residues 1-42 (MGEDAAQAEKFQHPGSDMRQEKPSSPSPMPSSTPSPSLNLGN) is disordered. Gly2 is subject to N-acetylglycine. An interaction with CAVIN1 region spans residues 2 to 168 (GEDAAQAEKF…IFQEENEIPA (167 aa)). Residues 10 to 22 (KFQHPGSDMRQEK) are compositionally biased toward basic and acidic residues. A phosphoserine mark is found at Ser27, Ser35, Ser37, and Ser51. Coiled-coil stretches lie at residues 61-82 (LLDKLVNMLDAVQENQHKMEQR) and 125-154 (TRAVKERMDRQCAQVKRLENNHAQLLRRNH). Positions 62 to 100 (LDKLVNMLDAVQENQHKMEQRQISLEGSVKGIQNDLTKL) are leucine-zipper. Residues Thr196 and Thr199 each carry the phosphothreonine modification. Disordered stretches follow at residues 199–234 (TVDLSSDDDLPHDEEALEDSAEEKVEESRAEKIKRS) and 271–425 (IKKS…HQTS). Phosphoserine is present on residues Ser203, Ser204, and Ser218. Over residues 203 to 219 (SSDDDLPHDEEALEDSA) the composition is skewed to acidic residues. Positions 210–268 (HDEEALEDSAEEKVEESRAEKIKRSSLKKVDSLKKAFSRQNIEKKMNKLGTKIVSVERR) form a coiled coil. The span at 220–234 (EEKVEESRAEKIKRS) shows a compositional bias: basic and acidic residues. Over residues 274 to 287 (SLTSNHQKISSGKS) the composition is skewed to polar residues. A phosphoserine mark is found at Ser283, Ser284, Ser287, Ser288, and Ser293. Residues 303-317 (REGESHAENETKSED) are compositionally biased toward basic and acidic residues. Residues Ser332, Ser341, Ser366, and Ser370 each carry the phosphoserine modification. Position 375 is a phosphothreonine (Thr375). The segment covering 376 to 385 (IVEDEEEESV) has biased composition (acidic residues). Tyr395 is modified (phosphotyrosine). The residue at position 403 (Ser403) is a Phosphoserine.

Belongs to the CAVIN family. In terms of assembly, component of the CAVIN complex composed of CAVIN1, CAVIN2, CAVIN3 and CAVIN4. Binds to PRKCA in the presence of phosphatidylserine. Interacts with CAVIN4; this augments the transactivation of NPPA by CAVIN4. Interacts with CAVIN1. Interacts with CAV3. In terms of processing, phosphorylated on Ser residues. As to expression, highly expressed in heart and lung, and expressed at lower levels in brain, kidney, liver, pancreas, placenta, and skeletal muscle.

Its subcellular location is the cytoplasm. The protein resides in the cytosol. It is found in the membrane. The protein localises to the caveola. In terms of biological role, plays an important role in caveolar biogenesis and morphology. Regulates caveolae morphology by inducing membrane curvature within caveolae. Plays a role in caveola formation in a tissue-specific manner. Required for the formation of caveolae in the lung and fat endothelia but not in the heart endothelia. Negatively regulates the size or stability of CAVIN complexes in the lung endothelial cells. May play a role in targeting PRKCA to caveolae. This is Caveolae-associated protein 2 from Homo sapiens (Human).